The primary structure comprises 519 residues: Sensory neuron membrane protein 2 (519 aa).

The Cytoplasmic portion of the chain corresponds to 1–7; it reads MLAKHSK. The helical transmembrane segment at 8 to 28 threads the bilayer; that stretch reads LFFTGSVVFLIVAIVLASWGF. Topologically, residues 29 to 469 are extracellular; it reads PKIISTRIQK…DAHALLSYAQ (441 aa). Asparagine 44, asparagine 67, asparagine 104, asparagine 166, asparagine 229, asparagine 272, and asparagine 314 each carry an N-linked (GlcNAc...) asparagine glycan. Intrachain disulfides connect cysteine 268–cysteine 338, cysteine 299–cysteine 362, and cysteine 340–cysteine 351. The chain crosses the membrane as a helical span at residues 470–490; that stretch reads LARWIILAAAIILAIIATITV. The Cytoplasmic portion of the chain corresponds to 491-519; the sequence is ARSTSLISWPRNSNSVNFIIGPMVNDKMR.

This sequence belongs to the CD36 family. Localizes to both male and female antennae but not the leg, wing, gut, head or thoracic ganglia. Detected throughout the sensory epithelium, associating with both sex-pheromone sensilla and plant-volatile sensilla. Differentially expressed among different sensilla and different neurons within a given sensillum.

Its subcellular location is the cell membrane. Plays an olfactory role that is not restricted to pheromone sensitivity. In Manduca sexta (Tobacco hawkmoth), this protein is Sensory neuron membrane protein 2.